Here is a 196-residue protein sequence, read N- to C-terminus: Venom platylysin (196 aa).

Belongs to the redulysin-like family. As to expression, expressed by the venom gland.

Its subcellular location is the secreted. Probable insecticidal toxin that has been detected in a semi-pure insecticidal fraction. In Platymeris biguttatus (Two-spotted assassin bug), this protein is Venom platylysin.